The primary structure comprises 582 residues: DNA mismatch repair protein MutL (582 aa).

The protein belongs to the DNA mismatch repair MutL/HexB family.

In terms of biological role, this protein is involved in the repair of mismatches in DNA. It is required for dam-dependent methyl-directed DNA mismatch repair. May act as a 'molecular matchmaker', a protein that promotes the formation of a stable complex between two or more DNA-binding proteins in an ATP-dependent manner without itself being part of a final effector complex. This chain is DNA mismatch repair protein MutL, found in Buchnera aphidicola subsp. Schizaphis graminum (strain Sg).